We begin with the raw amino-acid sequence, 24 residues long: Humanin-like 13 (24 aa).

The protein belongs to the humanin family.

The protein localises to the secreted. It localises to the cytoplasm. Functionally, plays a role as a neuroprotective and antiapoptotic factor. This is Humanin-like 13 from Homo sapiens (Human).